Consider the following 235-residue polypeptide: Pyridoxine 5'-phosphate synthase (235 aa).

A 3-amino-2-oxopropyl phosphate-binding site is contributed by N7. A 1-deoxy-D-xylulose 5-phosphate-binding site is contributed by 9-10 (DH). A 3-amino-2-oxopropyl phosphate-binding site is contributed by R18. H43 serves as the catalytic Proton acceptor. Residues R45 and H50 each contribute to the 1-deoxy-D-xylulose 5-phosphate site. Residue E70 is the Proton acceptor of the active site. T100 provides a ligand contact to 1-deoxy-D-xylulose 5-phosphate. Residue H187 is the Proton donor of the active site. 3-amino-2-oxopropyl phosphate is bound by residues G188 and 209–210 (GH).

Belongs to the PNP synthase family. In terms of assembly, homooctamer; tetramer of dimers.

It is found in the cytoplasm. The enzyme catalyses 3-amino-2-oxopropyl phosphate + 1-deoxy-D-xylulose 5-phosphate = pyridoxine 5'-phosphate + phosphate + 2 H2O + H(+). It participates in cofactor biosynthesis; pyridoxine 5'-phosphate biosynthesis; pyridoxine 5'-phosphate from D-erythrose 4-phosphate: step 5/5. Its function is as follows. Catalyzes the complicated ring closure reaction between the two acyclic compounds 1-deoxy-D-xylulose-5-phosphate (DXP) and 3-amino-2-oxopropyl phosphate (1-amino-acetone-3-phosphate or AAP) to form pyridoxine 5'-phosphate (PNP) and inorganic phosphate. The chain is Pyridoxine 5'-phosphate synthase from Desulfatibacillum aliphaticivorans.